A 136-amino-acid polypeptide reads, in one-letter code: Ig heavy chain V region XIG8 (136 aa).

Residues Gly-1–Ser-18 form the signal peptide. Positions Gln-19–Gln-128 constitute an Ig-like domain.

The protein is Ig heavy chain V region XIG8 of Xenopus laevis (African clawed frog).